Reading from the N-terminus, the 115-residue chain is Large ribosomal subunit protein bL20c (115 aa).

It belongs to the bacterial ribosomal protein bL20 family.

Its subcellular location is the plastid. The protein resides in the chloroplast. Its function is as follows. Binds directly to 23S ribosomal RNA and is necessary for the in vitro assembly process of the 50S ribosomal subunit. It is not involved in the protein synthesizing functions of that subunit. This chain is Large ribosomal subunit protein bL20c, found in Physcomitrium patens (Spreading-leaved earth moss).